Reading from the N-terminus, the 570-residue chain is Protein misato homolog 1 (570 aa).

Ser495 carries the phosphoserine modification.

It belongs to the misato family.

The protein localises to the mitochondrion outer membrane. It localises to the cytoplasm. Involved in the regulation of mitochondrial distribution and morphology. Required for mitochondrial fusion and mitochondrial network formation. The protein is Protein misato homolog 1 (MSTO1) of Pongo pygmaeus (Bornean orangutan).